We begin with the raw amino-acid sequence, 233 residues long: Homeobox protein ceh-30 (233 aa).

Polar residues predominate over residues 50–85; it reads NNSTYSHDLDPSPQSVRSDLSTSPRASSPDRNSPMS. 2 disordered regions span residues 50-93 and 206-233; these read NNST…KART and FQAT…SNSD. Residues 88-147 constitute a DNA-binding region (homeobox); it reads SRKARTIFTDKQLQELENTFEKQKYLSVQDRMDLAHRMGLSDTQVKTWYQNRRTKWKRQA. Over residues 224–233 the composition is skewed to polar residues; that stretch reads PQLDVSSNSD.

The protein resides in the nucleus. Cell-type specific anti-apoptotic transcription factor required for the sexually dimorphic survival of the male-specific CEM (cephalic male) sensory neurons during sex determination. In hermaphrodites, the homologous cells undergo programmed cell death due to transcriptional repression of ceh-30 by tra-1, the terminal regulator in the sex determination pathway. This chain is Homeobox protein ceh-30, found in Caenorhabditis briggsae.